The primary structure comprises 473 residues: Ribulose bisphosphate carboxylase large chain (473 aa).

Residues Met-1–Ser-2 constitute a propeptide that is removed on maturation. Pro-3 is modified (N-acetylproline). An N6,N6,N6-trimethyllysine modification is found at Lys-14. Asn-123 and Thr-173 together coordinate substrate. Residue Lys-175 is the Proton acceptor of the active site. Lys-177 is a substrate binding site. Residues Lys-201, Asp-203, and Glu-204 each coordinate Mg(2+). Lys-201 carries the post-translational modification N6-carboxylysine. His-294 acts as the Proton acceptor in catalysis. Arg-295, His-327, and Ser-379 together coordinate substrate.

This sequence belongs to the RuBisCO large chain family. Type I subfamily. As to quaternary structure, heterohexadecamer of 8 large chains and 8 small chains; disulfide-linked. The disulfide link is formed within the large subunit homodimers. Requires Mg(2+) as cofactor. Post-translationally, the disulfide bond which can form in the large chain dimeric partners within the hexadecamer appears to be associated with oxidative stress and protein turnover.

The protein resides in the plastid. Its subcellular location is the chloroplast. The catalysed reaction is 2 (2R)-3-phosphoglycerate + 2 H(+) = D-ribulose 1,5-bisphosphate + CO2 + H2O. It catalyses the reaction D-ribulose 1,5-bisphosphate + O2 = 2-phosphoglycolate + (2R)-3-phosphoglycerate + 2 H(+). Functionally, ruBisCO catalyzes two reactions: the carboxylation of D-ribulose 1,5-bisphosphate, the primary event in carbon dioxide fixation, as well as the oxidative fragmentation of the pentose substrate in the photorespiration process. Both reactions occur simultaneously and in competition at the same active site. This Cajanus cajan (Pigeon pea) protein is Ribulose bisphosphate carboxylase large chain.